A 561-amino-acid chain; its full sequence is Putative transport protein DNO_0009 (561 aa).

5 helical membrane-spanning segments follow: residues Val4–Ile24, Val29–Leu49, Phe74–Ser94, Ala104–Phe124, and Met166–Ile186. 2 RCK C-terminal domains span residues Leu198–Glu283 and Ala285–Asn369. Transmembrane regions (helical) follow at residues Met379–Leu399, Ala411–Phe433, Ile447–Leu467, Phe472–Ile492, Tyr501–Ala521, and Val538–Trp558.

The protein belongs to the AAE transporter (TC 2.A.81) family. YidE subfamily.

It localises to the cell membrane. The polypeptide is Putative transport protein DNO_0009 (Dichelobacter nodosus (strain VCS1703A)).